The sequence spans 646 residues: Lipoteichoic acid synthase (646 aa).

Residues methionine 1–lysine 7 are Cytoplasmic-facing. The helical transmembrane segment at isoleucine 8 to serine 28 threads the bilayer. Over tyrosine 29–asparagine 43 the chain is Extracellular. The chain crosses the membrane as a helical span at residues leucine 44–phenylalanine 64. Residues lysine 65–lysine 68 are Cytoplasmic-facing. Residues alanine 69 to valine 89 form a helical membrane-spanning segment. The Extracellular portion of the chain corresponds to tyrosine 90–serine 119. Residues phenylalanine 120–phenylalanine 140 traverse the membrane as a helical segment. Over lysine 141 to lysine 153 the chain is Cytoplasmic. Residues phenylalanine 154–glutamate 174 form a helical membrane-spanning segment. At threonine 175–lysine 646 the chain is on the extracellular side. Residues glutamate 255 and threonine 300 each contribute to the Mn(2+) site. The active site involves threonine 300. Substrate is bound at residue histidine 416. 2 residues coordinate Mn(2+): aspartate 475 and histidine 476.

This sequence belongs to the LTA synthase family. Proteolytically cleaved.

It is found in the cell membrane. It localises to the secreted. It participates in cell wall biogenesis; lipoteichoic acid biosynthesis. In terms of biological role, catalyzes the polymerization of lipoteichoic acid (LTA) polyglycerol phosphate, a reaction that presumably uses phosphatidylglycerol (PG) as substrate. Is required for staphylococcal growth and cell division process. The chain is Lipoteichoic acid synthase (ltaS) from Staphylococcus epidermidis (strain ATCC 12228 / FDA PCI 1200).